The sequence spans 242 residues: Agamous-like MADS-box protein AGL8 (242 aa).

The MADS-box domain maps to 3 to 57 (RGRVQLKRIENKINRQVTFSKRRSGLLKKAHEISVLCDAEVALIVFSSKGKLFEY). In terms of domain architecture, K-box spans 88–178 (SENWVLEHAK…LKKIKEREKK (91 aa)). Residues 89-178 (ENWVLEHAKL…LKKIKEREKK (90 aa)) are a coiled coil.

In terms of assembly, homodimer capable of binding to CArG-box sequences. Vascular tissue of cauline leaves, floral shoot apex and valves of carpels and fruits.

The protein localises to the nucleus. Probable transcription factor that promotes early floral meristem identity in synergy with APETALA1 and CAULIFLOWER. Is required subsequently for the transition of an inflorescence meristem into a floral meristem. Seems to be partially redundant to the function of APETALA1 and CAULIFLOWER in the up-regulation of LEAFY. Is also required for normal pattern of cell division, expansion and differentiation during morphogenesis of the silique. Probably not required for fruit elongation but instead is required to prevent ectopic activity of IND. Represses SAUR10 expression in stems and inflorescence branches. This chain is Agamous-like MADS-box protein AGL8 (AGL8), found in Arabidopsis thaliana (Mouse-ear cress).